Reading from the N-terminus, the 514-residue chain is MQQLNPSEISELIRARIAGFEGRVETRSQGTIISLSDGILRIHGLEDVMYGEMLELPGGRFGLAMNLEQDNVGAVVLGEFSGLQEGDVVKCTGRVMQVPIGKALLGRVVNALGQPVDGKGAIDAEEFDVLEKIAPGVIDRQSVDEPMQTGIKSIDAMVPIGRGQRELIIGDRQTGKTAVAVDAILNQKGKDVQCIYVAIGQKASTVAGVVRKLEEYGAMEYTTVIAANASESAAMQYLAPYAGCTMGEYFRDRGMNALIVYDDLTKQAWAYRQISLLLRRPPGREAYPGDVFYLHSRLLERAARVNADFVEKFTKGEVKGKTGSLTALPIIETQAGDVSAFVPTNVISITDGQIYLETDLFNAGIRPAINAGLSVSRVGGAAQTKIIKKLGGGIRLDLAQYRELAAFAQFASDLDEITRKQIERGKRVTELLKQDQFSPMSVAEQGAALFAASSGALDDVEVANVRPFEKALLAYLNSNNKELMAGIEEKKDLTDDLKKQLDAAVKQFKSGSTY.

Glycine 170 to threonine 177 is an ATP binding site.

It belongs to the ATPase alpha/beta chains family. In terms of assembly, F-type ATPases have 2 components, CF(1) - the catalytic core - and CF(0) - the membrane proton channel. CF(1) has five subunits: alpha(3), beta(3), gamma(1), delta(1), epsilon(1). CF(0) has three main subunits: a(1), b(2) and c(9-12). The alpha and beta chains form an alternating ring which encloses part of the gamma chain. CF(1) is attached to CF(0) by a central stalk formed by the gamma and epsilon chains, while a peripheral stalk is formed by the delta and b chains.

The protein localises to the cell inner membrane. It carries out the reaction ATP + H2O + 4 H(+)(in) = ADP + phosphate + 5 H(+)(out). Produces ATP from ADP in the presence of a proton gradient across the membrane. The alpha chain is a regulatory subunit. The polypeptide is ATP synthase subunit alpha (Acidithiobacillus ferrooxidans (strain ATCC 23270 / DSM 14882 / CIP 104768 / NCIMB 8455) (Ferrobacillus ferrooxidans (strain ATCC 23270))).